The following is a 234-amino-acid chain: VIGGDECNINEHRFLVAVYEGTNWTFICGGVLIHPEWVITAEHCARRRMNLVFGMHRKSEKFDDEQERYPKKRYFIRCNKTRTSWDEDIMLIRLNKPVNNSEHIAPLSLPSNPPIVGSDCRVMGWGSINRRIDVLSDEPRCANINLHNFTMCHGLFRKMPKKGRVLCAGDLRGRRDSCNSDSGGPLICNEELHGIVARGPNPCAQPNKPALYTSIYDYRDWVNNVIAGNATCSP.

A Peptidase S1 domain is found at 1 to 227; it reads VIGGDECNIN…YRDWVNNVIA (227 aa). 6 cysteine pairs are disulfide-bonded: Cys-7–Cys-141, Cys-28–Cys-44, Cys-78–Cys-232, Cys-120–Cys-188, Cys-152–Cys-167, and Cys-178–Cys-203. Asn-23 carries an N-linked (GlcNAc...) asparagine glycan. The Charge relay system role is filled by His-43. A glycan (N-linked (GlcNAc...) asparagine) is linked at Asn-79. Asp-88 (charge relay system) is an active-site residue. Residues Asn-99 and Asn-148 are each glycosylated (N-linked (GlcNAc...) asparagine). The active-site Charge relay system is Ser-182. N-linked (GlcNAc...) asparagine glycosylation occurs at Asn-229.

This sequence belongs to the peptidase S1 family. Snake venom subfamily. Monomer. As to expression, expressed by the venom gland.

It localises to the secreted. The catalysed reaction is Selective cleavage of Arg-|-Xaa bond in fibrinogen, to form fibrin, and release fibrinopeptide A. The specificity of further degradation of fibrinogen varies with species origin of the enzyme.. Its function is as follows. Thrombin-like snake venom serine protease that acts as an anticoagulant. It cleaves fibrinogen (FGA) to split off the A-fibrinopeptides (A, AY and AP), but not the B-fibrinopeptide. The resulting fibrin polymers are imperfectly formed and much smaller in size (1 to 2 um long) than the fibrin polymers produced by the action of thrombin. These ancrod-induced microthrombi are friable, unstable, urea-soluble and have significantly degraded alpha chains. They do not cross-link to form thrombi. They are markedly susceptible to digestion by plasmin and are rapidly removed from circulation by either reticuloendothelial phagocytosis or normal fibrinolysis, or both. Anticoagulation through the removal of fibrinogen from the blood is rapid, occurring within hours following its administration. It does not activate plasminogen and does not degrade preformed, fully cross-linked thrombin fibrin. It also reduces the level of plasminogen activator inhibitor (PAI) and may stimulate the release of tissue plasminogen activator (PLAT) from the endothelium. The profibrinolytic effect of these 2 actions appears to be limited to local microthrombus degradation. The sequence is that of Thrombin-like enzyme ancrod from Calloselasma rhodostoma (Malayan pit viper).